The primary structure comprises 397 residues: MSESVHTNPSLYSKGMLAVICAQFLSAFGDNALLFATLALMKQLYYPEWSQPVLQMLFVGAYILFAPFVGQFADSFAKGRVMMVANGLKLLGAGCICFGVNPFIGYTLVGIGAAAYSPAKYGILGELTTGDKLVKANGLMESSTIAAILLGSMAGGILADWHVLAALIVCALVYGGAVVANLWIPRLPAARPGQSWRFKPMTHSFFSACRTLWRNGETRFSLMGTSLFWGAGVTLRFLLVIWVPVALGITSNAMPTYLNAMVAVGIVLGAGAAAKLVTLETVSRCMPAGILIGIAVIAFAVQQSLLPAFGLLLLLGVFGGFFIVPLNALLQERGKHSVGAGNAIAVQNLGENVAMLLMLGLYSLAVSVGVPPVAVGIGFGAVFAVAIAALWVWGRRK.

The next 11 membrane-spanning stretches (helical) occupy residues 16–36 (MLAVICAQFLSAFGDNALLFA), 53–73 (VLQMLFVGAYILFAPFVGQFA), 91–111 (LGAGCICFGVNPFIGYTLVGI), 139–159 (LMESSTIAAILLGSMAGGILA), 164–184 (LAALIVCALVYGGAVVANLWI), 227–247 (LFWGAGVTLRFLLVIWVPVAL), 253–273 (AMPTYLNAMVAVGIVLGAGAA), 281–301 (TVSRCMPAGILIGIAVIAFAV), 305–325 (LLPAFGLLLLLGVFGGFFIVP), 352–372 (NVAMLLMLGLYSLAVSVGVPP), and 373–393 (VAVGIGFGAVFAVAIAALWVW).

The protein belongs to the major facilitator superfamily. LplT (TC 2.A.1.42) family.

The protein localises to the cell inner membrane. Its function is as follows. Catalyzes the facilitated diffusion of 2-acyl-glycero-3-phosphoethanolamine (2-acyl-GPE) into the cell. This chain is Lysophospholipid transporter LplT, found in Klebsiella pneumoniae subsp. pneumoniae (strain ATCC 700721 / MGH 78578).